The following is a 562-amino-acid chain: Catalase T (562 aa).

Active-site residues include His64 and Asn137. Heme is bound at residue Tyr351.

It belongs to the catalase family. In terms of assembly, homotetramer. Heme serves as cofactor.

Its subcellular location is the cytoplasm. It carries out the reaction 2 H2O2 = O2 + 2 H2O. Functionally, occurs in almost all aerobically respiring organisms and serves to protect cells from the toxic effects of hydrogen peroxide. The sequence is that of Catalase T (CTT1) from Saccharomyces cerevisiae (strain YJM789) (Baker's yeast).